The chain runs to 656 residues: MYLSIIILPVLGSIVAGFFGRKLGVRGAQIITCSCVIVTTILALLAWVEVGFNNIPVTINLFRWIDSEWFNIIWGFQFDSLTVSMLLPVLIISSLVHIYSISYMSGDPHNQRFFSYLSLFTFMMIILVTGNNYLLMFVGWEGVGVCSYLLVSFWFTRIAANQSSISAFLTNRVGDCFLTIGMFAILWSLGNLDYATVFSLAPYINENIITIIGICLVIGAMAKSSQVGLHVWLPMAMEGPTPVSALIHAATMVTAGVYLLMRSSPLIEYSSTVLLICLWLGAITTVFSSLVGLFQQDIKKVIAYSTMSQLGLMVVAIGLSSYNIALFHLVNHAFYKAALFLGAGSIIHAVADNQDFRKYGGLREFLPLTYSIILIASLSLAAFPFLTGFYSKDLILESAFGQFTFSGVSVYAISTIGAIFTTLYSVKVIYLTFLANPNGSLMTVRHAHEGDIFLTLPLVILAIFSIFFGYLTKDIFIGLGSSFFVDNSLYVHPVHEILIDTEFGVPTVFKILPFIFTVLFSILAILLSEFIPGSVFNFKLSRFGYNLFGFFNQRFLIEMFYNNYITNLVLTLGSQTTKVLDKGSVELIGPFGLEKGLMNFSKSLTKLSTGVVTSYALYILLGLISFIIILYLSQISSSLIVLLIILTLFSLNFNKQ.

The next 17 helical transmembrane spans lie at 5 to 23 (IIIL…GRKL), 30 to 52 (IITC…EVGF), 81 to 103 (LTVS…SISY), 112 to 129 (RFFS…ILVT), 133 to 155 (YLLM…SFWF), 168 to 190 (FLTN…WSLG), 200 to 222 (LAPY…GAMA), 243 to 262 (VSAL…LLMR), 272 to 294 (TVLL…VGLF), 301 to 320 (VIAY…IGLS), 324 to 346 (IALF…AGSI), 367 to 389 (PLTY…LTGF), 409 to 431 (SVYA…VIYL), 452 to 471 (IFLT…FGYL), 514 to 536 (FIFT…GSVF), 607 to 629 (LSTG…FIII), and 634 to 653 (QISS…SLNF).

The protein belongs to the complex I subunit 5 family.

The protein localises to the mitochondrion inner membrane. The catalysed reaction is a ubiquinone + NADH + 5 H(+)(in) = a ubiquinol + NAD(+) + 4 H(+)(out). Functionally, core subunit of the mitochondrial membrane respiratory chain NADH dehydrogenase (Complex I) that is believed to belong to the minimal assembly required for catalysis. Complex I functions in the transfer of electrons from NADH to the respiratory chain. The immediate electron acceptor for the enzyme is believed to be ubiquinone. The polypeptide is NADH-ubiquinone oxidoreductase chain 5 (ND5) (Cryphonectria parasitica (Chestnut blight fungus)).